Consider the following 131-residue polypeptide: Translation initiation factor 5A (131 aa).

The residue at position 36 (Lys-36) is a Hypusine.

This sequence belongs to the eIF-5A family.

It is found in the cytoplasm. Its function is as follows. Functions by promoting the formation of the first peptide bond. The polypeptide is Translation initiation factor 5A (Sulfurisphaera tokodaii (strain DSM 16993 / JCM 10545 / NBRC 100140 / 7) (Sulfolobus tokodaii)).